We begin with the raw amino-acid sequence, 132 residues long: Large ribosomal subunit protein bL17 (132 aa).

It belongs to the bacterial ribosomal protein bL17 family. As to quaternary structure, part of the 50S ribosomal subunit. Contacts protein L32.

The polypeptide is Large ribosomal subunit protein bL17 (Leptothrix cholodnii (strain ATCC 51168 / LMG 8142 / SP-6) (Leptothrix discophora (strain SP-6))).